A 219-amino-acid chain; its full sequence is 7-cyano-7-deazaguanine synthase (219 aa).

10–20 (FSGGQDSTTCL) contributes to the ATP binding site. Positions 188, 196, 199, and 202 each coordinate Zn(2+).

Belongs to the QueC family. Zn(2+) is required as a cofactor.

The enzyme catalyses 7-carboxy-7-deazaguanine + NH4(+) + ATP = 7-cyano-7-deazaguanine + ADP + phosphate + H2O + H(+). The protein operates within purine metabolism; 7-cyano-7-deazaguanine biosynthesis. In terms of biological role, catalyzes the ATP-dependent conversion of 7-carboxy-7-deazaguanine (CDG) to 7-cyano-7-deazaguanine (preQ(0)). The chain is 7-cyano-7-deazaguanine synthase from Neisseria meningitidis serogroup C / serotype 2a (strain ATCC 700532 / DSM 15464 / FAM18).